Reading from the N-terminus, the 334-residue chain is MRTFVTGGSGYLGRNLLSALVARGISVRALVRSEEAAQKVQALGAQPILGTLEHRETLKEGMAGCDVLFHAAALTSARATDAEFHRANVLGTETVLAAARDARIQRMVHVSTEAVLADGRPLLQVDESHPLPKRPFAGYPATKAQAEQLVLQANGPGFTTVVVRPRFIWGADDTAFLPQLIDAIRTKRFRWVDGGRYLTSTCHVANVCEGMLLAAERGPGGEVYFLTDGAPVELRSFLTLLLETQGIKAEVGNIPFQAARAAAHLGESLWRALVPQARAPALRLAVYLLGREVTLNDDKARRELGYAGRVTHQQGLDALRQAGPAGQGAMPHRA.

The Proton donor role is filled by Tyr-139.

Belongs to the 3-beta-HSD family.

The enzyme catalyses aurachin B + NAD(+) + H2O = 4-hydroxy-2-methyl-3-oxo-4-[(2E,6E)-farnesyl]-3,4-dihydroquinoline 1-oxide + NADH. The catalysed reaction is 3,4-dihydroxy-2-methyl-4-[(2E,6E)-farnesyl]-3,4-dihydroquinoline 1-oxide + NAD(+) = 4-hydroxy-2-methyl-3-oxo-4-[(2E,6E)-farnesyl]-3,4-dihydroquinoline 1-oxide + NADH + H(+). In terms of biological role, ketoreductase that catalyzes the final step in the conversion of aurachin C to aurachin B. Catalyzes the reduction of 4-hydroxy-2-methyl-3-oxo-4-[(2E,6E)-farnesyl]-3,4-dihydroquinoline-1-oxide to form 3,4-dihydroxy-2-methyl-4-[(2E,6E)-farnesyl]-3,4-dihydroquinoline 1-oxide, which then undergoes a spontaneous dehydration to form aurachin B. Accepts both NADH and NADPH, but has a preference for NADH. The sequence is that of 4-hydroxy-2-methyl-3-oxo-4-farnesyl-3,4-dihydroquinoline-1-oxide ketoreductase from Stigmatella aurantiaca.